A 363-amino-acid polypeptide reads, in one-letter code: MEAATMAWTAAGVGMALVYWFVWVMGAAEVKGKRAVDLKMGSITNDKVKDKYTQYWSFFRRPKETATTEASAEKVPAFVDTFYNLVTDIYEWGWGQSFHFSPSLPGRSHREATRVHEERVADLLQAKPGHRLLDVGCGVGGPMRAIAAHSGSNVVGITINEYQVNRARAHNRKAGLDSRCEVVCGNFLSMPFSDASFDGAYSIEATCHAPRLQDVYGEVFRVLKPGGLYVSYEWVTTSLYRADNPEHVEAIHGIERGDALPGLRRQDEIASIAKEVGFEVLKELDLALPPALPWWTRLKMGRIAYWRNSLVVRVLTMLRIAPKGVCEVHEMLYETAQHLTRGGETGIFTPMHMVLLRKPVESK.

Residues 6 to 26 (MAWTAAGVGMALVYWFVWVMG) form a helical membrane-spanning segment.

This sequence belongs to the class I-like SAM-binding methyltransferase superfamily. Erg6/SMT family.

It is found in the membrane. The catalysed reaction is 24-methylidenelophenol + S-adenosyl-L-methionine = (Z)-24-ethylidenelophenol + S-adenosyl-L-homocysteine + H(+). Its pathway is steroid biosynthesis; sterol biosynthesis. Catalyzes the methyl transfer from S-adenosyl-methionine to the methylene group of 24-methylene lophenol to form 24-ethylidene lophenol. This chain is 24-methylenesterol C-methyltransferase 2 (Smt2-1), found in Oryza sativa subsp. japonica (Rice).